The primary structure comprises 259 residues: Phosphatidylglycerol--prolipoprotein diacylglyceryl transferase (259 aa).

7 helical membrane passes run 9–29, 48–68, 83–103, 114–133, 167–187, 197–217, and 227–247; these read LGPL…ILAV, DFIL…YVIF, IWHG…VLFI, DFLD…GRWG, TPTF…IMIL, GEVA…IEGM, and LRVS…LIVI. Arg131 is an a 1,2-diacyl-sn-glycero-3-phospho-(1'-sn-glycerol) binding site.

The protein belongs to the Lgt family.

The protein localises to the cell membrane. The enzyme catalyses L-cysteinyl-[prolipoprotein] + a 1,2-diacyl-sn-glycero-3-phospho-(1'-sn-glycerol) = an S-1,2-diacyl-sn-glyceryl-L-cysteinyl-[prolipoprotein] + sn-glycerol 1-phosphate + H(+). It functions in the pathway protein modification; lipoprotein biosynthesis (diacylglyceryl transfer). Functionally, catalyzes the transfer of the diacylglyceryl group from phosphatidylglycerol to the sulfhydryl group of the N-terminal cysteine of a prolipoprotein, the first step in the formation of mature lipoproteins. The protein is Phosphatidylglycerol--prolipoprotein diacylglyceryl transferase of Streptococcus mutans serotype c (strain ATCC 700610 / UA159).